Here is a 475-residue protein sequence, read N- to C-terminus: Fez family zinc finger protein 1 (475 aa).

Residues 28–43 carry the Engrailed homology 1 repressor motif; the sequence is PLAFSIERIMARTPEP. 6 C2H2-type zinc fingers span residues 260 to 282, 288 to 310, 316 to 338, 344 to 366, 372 to 394, and 400 to 423; these read FTCEVCGKVFNAHYNLTRHMPVH, FVCKVCGKGFRQASTLCRHKIIH, HKCNQCGKAFNRSSTLNTHTRIH, FVCEFCGKGFHQKGNYKNHKLTH, FKCNICNKAFHQVYNLTFHMHTH, and FTCPTCGKGFCRNFDLKKHVRKLH. Positions 425–475 are disordered; it reads SSLGLTRTPTGEPSSDPPPQLQQPPPAPLPPLQPTLPPPGPLPSGLHQGHQ. Positions 427-437 are enriched in polar residues; sequence LGLTRTPTGEP. Over residues 439-466 the composition is skewed to pro residues; the sequence is SDPPPQLQQPPPAPLPPLQPTLPPPGPL.

This sequence belongs to the krueppel C2H2-type zinc-finger protein family.

It is found in the nucleus. In terms of biological role, transcription repressor. Involved in the axonal projection and proper termination of olfactory sensory neurons (OSN). Plays a role in rostro-caudal patterning of the diencephalon and in prethalamic formation. Expression is required in OSN to cell-autonomously regulate OSN axon projections. Regulates non-cell-autonomously the layer formation of the olfactory bulb development and the interneurons. May be required for correct rostral migration of the interneuron progenitors. This chain is Fez family zinc finger protein 1 (Fezf1), found in Mus musculus (Mouse).